A 65-amino-acid chain; its full sequence is Small ribosomal subunit protein eS27 (65 aa).

Positions 21, 24, 40, and 43 each coordinate Zn(2+). The C4-type zinc-finger motif lies at Cys-21–Cys-43.

This sequence belongs to the eukaryotic ribosomal protein eS27 family. As to quaternary structure, part of the 30S ribosomal subunit. Requires Zn(2+) as cofactor.

This is Small ribosomal subunit protein eS27 from Thermoplasma volcanium (strain ATCC 51530 / DSM 4299 / JCM 9571 / NBRC 15438 / GSS1).